Here is a 306-residue protein sequence, read N- to C-terminus: Extensin (306 aa).

An N-terminal signal peptide occupies residues 1 to 32 (MGRIARGSKMSSLIVSLLVVLVSLNLASETTA). The segment at 33–306 (KYTYSSPPPP…YTSPPPPHHY (274 aa)) is disordered. Pro residues-rich tracts occupy residues 38-122 (SPPP…PKHS), 133-152 (SPPPPTPVYKYKSPPPPKHS), 183-214 (SPPPPTPVYKYKSPPPPTPVYKYKSPPPPKHS), and 225-290 (SPPP…SPPP).

In terms of processing, hydroxylated on proline residues in the S-P-P-P-P repeat. O-glycosylated on hydroxyprolines.

It localises to the secreted. Its subcellular location is the primary cell wall. In terms of biological role, structural component in primary cell wall. The polypeptide is Extensin (Daucus carota (Wild carrot)).